The chain runs to 272 residues: Acetylglutamate kinase (272 aa).

Residues 46–47, R68, and N166 contribute to the substrate site; that span reads GA.

This sequence belongs to the acetylglutamate kinase family. ArgB subfamily.

Its subcellular location is the cytoplasm. It catalyses the reaction N-acetyl-L-glutamate + ATP = N-acetyl-L-glutamyl 5-phosphate + ADP. Its pathway is amino-acid biosynthesis; L-arginine biosynthesis; N(2)-acetyl-L-ornithine from L-glutamate: step 2/4. Catalyzes the ATP-dependent phosphorylation of N-acetyl-L-glutamate. In Dehalococcoides mccartyi (strain ATCC BAA-2266 / KCTC 15142 / 195) (Dehalococcoides ethenogenes (strain 195)), this protein is Acetylglutamate kinase.